The sequence spans 272 residues: Replication-associated protein A (272 aa).

A CRESS-DNA virus Rep endonuclease domain is found at 11-114 (SHRSPNTFLT…PLALFERGTF (104 aa)). An RCR-1 motif is present at residues 18 to 21 (FLTY). Residues Glu-52 and His-62 each contribute to the a divalent metal cation site. An RCR-2 motif is present at residues 60–65 (CLHALI). The active-site For DNA cleavage activity is the Tyr-100. The RCR-3 signature appears at 100 to 103 (YITK). Residue Glu-104 coordinates a divalent metal cation. An oligomerization region spans residues 175–187 (SANKLFPDIQEEF). The LXCXE motif, interaction with host RBR1 motif lies at 198–202 (LLCNE). A transactivation region spans residues 221 to 230 (LLLQPNCYSI). Positions 251-265 (QGSAASTSSVQQGQE) are enriched in polar residues. The interval 251-272 (QGSAASTSSVQQGQENLHGPEA) is disordered.

The protein belongs to the geminiviridae Rep protein family. Homooligomer. Interacts (via LXCXE domain) with host retinoblastoma-related protein 1 (RBR1), and may thereby deregulate the host cell cycle. Part of the C- and V-complexes which are RepA-Rep-DNA complexes involved in the c-sense and v-sense transcription.

It is found in the host nucleus. The protein resides in the host cytoplasm. In terms of biological role, implicated in enhancement of V-sense gene expression. Acts a an inhibitor of C-sense gene transcription. The polypeptide is Replication-associated protein A (Avena sativa (Oat)).